We begin with the raw amino-acid sequence, 263 residues long: Endonuclease 8 (263 aa).

The active-site Schiff-base intermediate with DNA is Pro-2. The active-site Proton donor is Glu-3. Lys-53 functions as the Proton donor; for beta-elimination activity in the catalytic mechanism. DNA is bound by residues Gln-70, Arg-125, and Asn-169. The FPG-type zinc-finger motif lies at 229–263 (KVFHRDGELCERCGGIIEKTTLSSRPFYWCPGCQH). Arg-253 acts as the Proton donor; for delta-elimination activity in catalysis.

It belongs to the FPG family. Requires Zn(2+) as cofactor.

The catalysed reaction is 2'-deoxyribonucleotide-(2'-deoxyribose 5'-phosphate)-2'-deoxyribonucleotide-DNA = a 3'-end 2'-deoxyribonucleotide-(2,3-dehydro-2,3-deoxyribose 5'-phosphate)-DNA + a 5'-end 5'-phospho-2'-deoxyribonucleoside-DNA + H(+). In terms of biological role, involved in base excision repair of DNA damaged by oxidation or by mutagenic agents. Acts as a DNA glycosylase that recognizes and removes damaged bases. Has a preference for oxidized pyrimidines, such as thymine glycol, 5,6-dihydrouracil and 5,6-dihydrothymine. Has AP (apurinic/apyrimidinic) lyase activity and introduces nicks in the DNA strand. Cleaves the DNA backbone by beta-delta elimination to generate a single-strand break at the site of the removed base with both 3'- and 5'-phosphates. This chain is Endonuclease 8, found in Shigella flexneri serotype 5b (strain 8401).